The following is a 241-amino-acid chain: MKGLLAGTIAAATFAVASAGEYCGQWDWAKSTQYTVYNNLWNKNAAASGSQCTGVDKISGSTIGWHTSYTWTGGAATEVKSYSNAALIFSPKQIKNIKTIPTKMKYSYSHSSGTFVADVSYDLFTSSTATGKNEYEIMIWLAAYGGAGPISSTGKAIATVTIGSNSFKLYKGPNGSTTVFSFVATKTITNFTADLQKFLTYLVNSQGLPSSQYLITLEAGTEPFVGTNAKMTVSSYSAAVN.

Residues M1 to A19 form the signal peptide. E136 is an active-site residue. Residues N174 and N190 are each glycosylated (N-linked (GlcNAc...) asparagine). E222 is a catalytic residue.

It belongs to the glycosyl hydrolase 12 (cellulase H) family. As to quaternary structure, interacts with host apoplastic glucanase inhibitor GIP2.

It catalyses the reaction xyloglucan + H2O = xyloglucan oligosaccharides.. With respect to regulation, the xyloglucanase activity is inhibited by the binding of the host apoplastic glucanase inhibitor GIP2. Its function is as follows. Glycoside hydrolase that exhibits xyloglucanase activity. Acts as an important virulence factor during P.parasitica infection of its host Nicotiana benthamiana. Also acts as a pathogen-associated molecular pattern (PAMP) in host species, where it can trigger defense responses including cell death. The PAMP activity is independent of its xyloglucanase activity. With paralog XLP1, is required to elevate apoplastic sugar during P.parasitica infection. This Phytophthora nicotianae (strain INRA-310) (Phytophthora parasitica) protein is Xyloglucan-specific endo-beta-1,4-glucanase 1.